The chain runs to 457 residues: Variant surface glycoprotein 20 (457 aa).

The N-terminal stretch at 1 to 20 is a signal peptide; that stretch reads MFTQAVIALIGLVSIRTGKT. The segment covering 385 to 397 has biased composition (polar residues); that stretch reads RQTASGDDQSAEN. The interval 385-406 is disordered; sequence RQTASGDDQSAENQCGGKKEDE. The N-linked (GlcNAc...) asparagine glycan is linked to Asn436. Ser440 carries GPI-anchor amidated serine lipidation. A propeptide spans 441-457 (removed in mature form); it reads NSFVIKKAPLWLAFLLF.

It localises to the cell membrane. VSG forms a coat on the surface of the parasite. The trypanosome evades the immune response of the host by expressing a series of antigenically distinct VSGs from an estimated 1000 VSG genes. The chain is Variant surface glycoprotein 20 from Trypanosoma equiperdum.